The sequence spans 427 residues: MTTIMVATMIGLLLLGFPMMIPLATASIIGFFMMFGGLGQMETLIQQLMAGIRPASLIAVPMFILAADIMTRGQSANRLINMVMAFIGHIKGGLAVSTAASCTLFGAVSGSTQATVVAVGSPLRPRMLKAGYSDSFSLALIINSSDIAFLIPPSIGMIIYGIISGTSIGELFIAGIGPGLMILVMFAIYCVIYAIVRGVPTEPKASWGERFSAVRLALWPLGFPVIIIGGIYGGIFSPTEAAAACVLYAVLLEFVVFRSLKISDIYAIAKSTGLITAVVFILVAVGNSFSWIISFAQIPQAILEAVGINEAGPTGVLIAICVAFFVACMFVDPIVVILVLTPVFAPAIEATGLDPVLVGILITLQVAIGSATPPFGCDIFTAIAIFKRPYLDVIKGTPPFIFMLVLAAALLILFPQIALFLRDLAFR.

The next 12 helical transmembrane spans lie at 13-35, 49-69, 79-99, 103-123, 147-167, 172-192, 216-236, 237-257, 273-293, 320-340, 356-376, and 400-420; these read LLLG…FMMF, MAGI…AADI, LINM…VSTA, TLFG…GSPL, IAFL…SGTS, FIAG…YCVI, LALW…GGIF, SPTE…FVVF, GLIT…SWII, ICVA…ILVL, VLVG…PPFG, and FIFM…IALF.

It belongs to the TRAP transporter large permease family. In terms of assembly, the complex comprises the extracytoplasmic solute receptor protein TeaA, and the two transmembrane proteins TeaB and TeaC.

The protein localises to the cell inner membrane. Functionally, part of the tripartite ATP-independent periplasmic (TRAP) transport system TeaABC involved in the uptake of ectoine and hydroxyectoine in response to osmotic upshock. Probably functions as a recovery system for synthesized ectoine that leaks out of the cell. In Halomonas elongata (strain ATCC 33173 / DSM 2581 / NBRC 15536 / NCIMB 2198 / 1H9), this protein is Ectoine TRAP transporter large permease protein TeaC (teaC).